The following is a 436-amino-acid chain: Serine protease inhibitor A6 (436 aa).

The signal sequence occupies residues 1-16 (MHLLVYLSLFFALALA). The segment at 26 to 60 (KHRHRHEQQGHHDSAKHGHQKDKQQQEQIKNDEGK) is disordered. Residues 32-60 (EQQGHHDSAKHGHQKDKQQQEQIKNDEGK) show a composition bias toward basic and acidic residues. Asparagine 260 and asparagine 289 each carry an N-linked (GlcNAc...) asparagine glycan.

The protein belongs to the serpin family. As to expression, liver.

It localises to the secreted. It is found in the extracellular space. Not yet known. This Xenopus laevis (African clawed frog) protein is Serine protease inhibitor A6 (serpina6).